The following is a 92-amino-acid chain: Small ribosomal subunit protein bS16 (92 aa).

The protein belongs to the bacterial ribosomal protein bS16 family.

This Desulforudis audaxviator (strain MP104C) protein is Small ribosomal subunit protein bS16.